Reading from the N-terminus, the 286-residue chain is Homoserine kinase (286 aa).

ATP is bound at residue 78–88 (PLARGLGSSSS).

It belongs to the GHMP kinase family. Homoserine kinase subfamily.

The protein localises to the cytoplasm. The catalysed reaction is L-homoserine + ATP = O-phospho-L-homoserine + ADP + H(+). It participates in amino-acid biosynthesis; L-threonine biosynthesis; L-threonine from L-aspartate: step 4/5. In terms of biological role, catalyzes the ATP-dependent phosphorylation of L-homoserine to L-homoserine phosphate. This chain is Homoserine kinase, found in Streptococcus equi subsp. zooepidemicus (strain H70).